The following is a 437-amino-acid chain: GTPase Obg (437 aa).

The region spanning 2 to 160 is the Obg domain; it reads SMFLDTAKIS…RQLELELKIL (159 aa). An OBG-type G domain is found at 161–338; it reads ADVGLVGFPS…LLEATAELLA (178 aa). GTP contacts are provided by residues 167–174, 192–196, 214–217, 284–287, and 319–321; these read GFPSVGKS, FTTIV, DLPG, NKMD, and SSL. Mg(2+)-binding residues include serine 174 and threonine 194. An OCT domain is found at 359–437; it reads GFAEAEKEFE…IGKFEFEFVD (79 aa).

It belongs to the TRAFAC class OBG-HflX-like GTPase superfamily. OBG GTPase family. As to quaternary structure, monomer. Mg(2+) is required as a cofactor.

The protein resides in the cytoplasm. An essential GTPase which binds GTP, GDP and possibly (p)ppGpp with moderate affinity, with high nucleotide exchange rates and a fairly low GTP hydrolysis rate. Plays a role in control of the cell cycle, stress response, ribosome biogenesis and in those bacteria that undergo differentiation, in morphogenesis control. The polypeptide is GTPase Obg (Streptococcus pyogenes serotype M28 (strain MGAS6180)).